Reading from the N-terminus, the 695-residue chain is Follicle-stimulating hormone receptor (695 aa).

The first 17 residues, Met1–Gly17, serve as a signal peptide directing secretion. Cystine bridges form between Cys18-Cys25 and Cys23-Cys32. The LRRNT domain occupies Cys18–Arg46. The Extracellular portion of the chain corresponds to Cys18–Arg366. LRR repeat units lie at residues Val49–Leu72, Glu73–Leu97, His98–Asn118, Leu119–Ser143, Leu144–Ser169, Phe170–Gly192, Thr193–Gly216, Ala217–Asn240, and Ile241–Asp259. Residue Asn93 is glycosylated (N-linked (GlcNAc...) asparagine). Asn191 and Asn199 each carry an N-linked (GlcNAc...) asparagine glycan. Intrachain disulfides connect Cys275/Cys346, Cys276/Cys292, Cys276/Cys356, and Cys292/Cys338. N-linked (GlcNAc...) asparagine glycosylation occurs at Asn293. Tyr335 is modified (sulfotyrosine). A helical transmembrane segment spans residues Val367–Leu387. Over Ile388–Arg398 the chain is Cytoplasmic. Residues Phe399–Ala419 form a helical membrane-spanning segment. The Extracellular segment spans residues Ser420–Ala444. Residues Ala445–Leu465 form a helical membrane-spanning segment. Over Glu466–Ala487 the chain is Cytoplasmic. The helical transmembrane segment at Ile488–Ile508 threads the bilayer. Over Ser509–Gln528 the chain is Extracellular. A helical transmembrane segment spans residues Leu529–Ala550. Residues His551 to Arg573 lie on the Cytoplasmic side of the membrane. The chain crosses the membrane as a helical span at residues Met574–Ser594. The Extracellular segment spans residues Ala595–Lys608. The helical transmembrane segment at Ile609–Phe629 threads the bilayer. Topologically, residues Thr630–Asn695 are cytoplasmic.

This sequence belongs to the G-protein coupled receptor 1 family. FSH/LSH/TSH subfamily. Homotrimer. Functions as a homotrimer binding the FSH hormone heterodimer composed of CGA and FSHB. Interacts with ARRB2. Interacts with APPL2; interaction is independent of follicle stimulating hormone stimulation. In terms of processing, N-glycosylated; indirectly required for FSH-binding, possibly via a conformational change that allows high affinity binding of hormone. Post-translationally, sulfated.

Its subcellular location is the cell membrane. Functionally, g protein-coupled receptor for follitropin, the follicle-stimulating hormone. Through cAMP production activates the downstream PI3K-AKT and ERK1/ERK2 signaling pathways. The sequence is that of Follicle-stimulating hormone receptor (FSHR) from Felis catus (Cat).